Here is a 105-residue protein sequence, read N- to C-terminus: Urease subunit beta (105 aa).

It belongs to the urease beta subunit family. As to quaternary structure, heterotrimer of UreA (gamma), UreB (beta) and UreC (alpha) subunits. Three heterotrimers associate to form the active enzyme.

It localises to the cytoplasm. It catalyses the reaction urea + 2 H2O + H(+) = hydrogencarbonate + 2 NH4(+). It participates in nitrogen metabolism; urea degradation; CO(2) and NH(3) from urea (urease route): step 1/1. This Shewanella halifaxensis (strain HAW-EB4) protein is Urease subunit beta.